A 178-amino-acid polypeptide reads, in one-letter code: Ribulose bisphosphate carboxylase small subunit, chloroplastic (178 aa).

The transit peptide at 1 to 54 directs the protein to the chloroplast; the sequence is MALISSAAVTTINRAPVQANLATPFTGLKSSAGFPVTKKNNDITSITSNGSRVN.

This sequence belongs to the RuBisCO small chain family. As to quaternary structure, heterohexadecamer of 8 large and 8 small subunits.

It localises to the plastid. The protein resides in the chloroplast. Functionally, ruBisCO catalyzes two reactions: the carboxylation of D-ribulose 1,5-bisphosphate, the primary event in carbon dioxide fixation, as well as the oxidative fragmentation of the pentose substrate. Both reactions occur simultaneously and in competition at the same active site. Although the small subunit is not catalytic it is essential for maximal activity. This Trifolium repens (Creeping white clover) protein is Ribulose bisphosphate carboxylase small subunit, chloroplastic.